Here is a 374-residue protein sequence, read N- to C-terminus: Flagellar P-ring protein (374 aa).

The signal sequence occupies residues 1–29 (MPGVGISRIVRIAVAALVALAPLMTPAHA).

Belongs to the FlgI family. The basal body constitutes a major portion of the flagellar organelle and consists of four rings (L,P,S, and M) mounted on a central rod.

It is found in the periplasm. It localises to the bacterial flagellum basal body. Its function is as follows. Assembles around the rod to form the L-ring and probably protects the motor/basal body from shearing forces during rotation. The protein is Flagellar P-ring protein of Nitrobacter hamburgensis (strain DSM 10229 / NCIMB 13809 / X14).